A 46-amino-acid chain; its full sequence is Probable butyrate kinase (46 aa).

The protein belongs to the acetokinase family.

Its subcellular location is the cytoplasm. It catalyses the reaction butanoate + ATP = butanoyl phosphate + ADP. This chain is Probable butyrate kinase (buk), found in Geobacillus stearothermophilus (Bacillus stearothermophilus).